We begin with the raw amino-acid sequence, 211 residues long: MVMEYLVLEKRLKRLREVLEKRQKDLIVFADNVKNEHNFSAIVRTCDAVGVLYLYYYHAEGKKAKINEGITQGSHKWVFIEKVDNPVQKLLEFKNRGFQIVATWLSKESVNFREVDYTKPTVLVVGNELQGVSPEIVEIADKKIVIPMYGMAQSLNVSVATGIILYEAQRQREEKGMYSRPSLSEEEIQKILKKWAYEDVIKERKRTLSTS.

S-adenosyl-L-methionine contacts are provided by T103, I146, and L155.

The protein belongs to the class IV-like SAM-binding methyltransferase superfamily. RNA methyltransferase TrmH family. Homodimer.

The enzyme catalyses guanosine(18) in tRNA + S-adenosyl-L-methionine = 2'-O-methylguanosine(18) in tRNA + S-adenosyl-L-homocysteine + H(+). Functionally, catalyzes the 2'-O methylation of guanosine at position 18 in tRNA. Type II methylase, which methylates only a subset of tRNA species. The chain is tRNA (guanosine(18)-2'-O)-methyltransferase from Aquifex aeolicus (strain VF5).